A 64-amino-acid polypeptide reads, in one-letter code: MISYKYGEKDKTLHVKIYVLIEHVPQKPSEEELRKVLPKILKDFANMVEQGKIKILDSDEWGIW.

This is an uncharacterized protein from Sulfolobus islandicus filamentous virus (isolate Iceland/Hveragerdi) (SIFV).